We begin with the raw amino-acid sequence, 156 residues long: Phosphopantetheine adenylyltransferase (156 aa).

Residue T10 participates in substrate binding. Residues 10–11 and H18 contribute to the ATP site; that span reads TF. Substrate is bound by residues K42, L74, and R88. Residues 89-91, E99, and 124-130 each bind ATP; these read GIR and WAFISSS.

Belongs to the bacterial CoaD family. In terms of assembly, homohexamer. It depends on Mg(2+) as a cofactor.

It is found in the cytoplasm. The catalysed reaction is (R)-4'-phosphopantetheine + ATP + H(+) = 3'-dephospho-CoA + diphosphate. The protein operates within cofactor biosynthesis; coenzyme A biosynthesis; CoA from (R)-pantothenate: step 4/5. Its function is as follows. Reversibly transfers an adenylyl group from ATP to 4'-phosphopantetheine, yielding dephospho-CoA (dPCoA) and pyrophosphate. The sequence is that of Phosphopantetheine adenylyltransferase from Hamiltonella defensa subsp. Acyrthosiphon pisum (strain 5AT).